Here is a 292-residue protein sequence, read N- to C-terminus: Very long chain fatty acid elongase 2 (292 aa).

7 consecutive transmembrane segments (helical) span residues 29-49 (WFLLDSYLPTFILTITYLLSI), 67-87 (ILTLYNLAITLLSAYMLVELI), 115-135 (VLWWYYFSKLVEFLDTIFFVL), 153-173 (MFNIWWCVLNWIPCGQSFFGP), 175-195 (LNSFIHILMYSYYGLSVFPSM), 205-225 (LTQAQLVQFVLTITHTLSAVV), and 230-250 (FPFGCLIFQSSYMMTLVILFL). Positions 289–292 (KKAQ) match the Di-lysine motif motif.

Belongs to the ELO family. ELOVL2 subfamily. Interacts with TECR. As to expression, highly expressed in testis, lower level in liver. Weakly expressed in white adipose tissue, brain and kidney.

It is found in the endoplasmic reticulum membrane. It carries out the reaction a very-long-chain acyl-CoA + malonyl-CoA + H(+) = a very-long-chain 3-oxoacyl-CoA + CO2 + CoA. It catalyses the reaction (5Z,8Z,11Z,14Z)-eicosatetraenoyl-CoA + malonyl-CoA + H(+) = (7Z,10Z,13Z,16Z)-3-oxodocosatetraenoyl-CoA + CO2 + CoA. The catalysed reaction is (7Z,10Z,13Z,16Z)-docosatetraenoyl-CoA + malonyl-CoA + H(+) = (9Z,12Z,15Z,18Z)-3-oxotetracosatetraenoyl-CoA + CO2 + CoA. The enzyme catalyses (5Z,8Z,11Z,14Z,17Z)-eicosapentaenoyl-CoA + malonyl-CoA + H(+) = 3-oxo-(7Z,10Z,13Z,16Z,19Z)-docosapentaenoyl-CoA + CO2 + CoA. It carries out the reaction (7Z,10Z,13Z,16Z,19Z)-docosapentaenoyl-CoA + malonyl-CoA + H(+) = (9Z,12Z,15Z,18Z,21Z)-3-oxotetracosapentaenoyl-CoA + CO2 + CoA. The protein operates within lipid metabolism; polyunsaturated fatty acid biosynthesis. In terms of biological role, catalyzes the first and rate-limiting reaction of the four reactions that constitute the long-chain fatty acids elongation cycle. This endoplasmic reticulum-bound enzymatic process allows the addition of 2 carbons to the chain of long- and very long-chain fatty acids (VLCFAs) per cycle. Condensing enzyme that catalyzes the synthesis of polyunsaturated very long chain fatty acid (C20- and C22-PUFA), acting specifically toward polyunsaturated acyl-CoA with the higher activity toward C20:4(n-6) acyl-CoA. May participate in the production of polyunsaturated VLCFAs of different chain lengths that are involved in multiple biological processes as precursors of membrane lipids and lipid mediators. Essential for the formation of C24:5(n-6) up to C30:5(n-6) PUFAs in testis, these fatty acids being indispensable for normal spermatogenesis and fertility. This chain is Very long chain fatty acid elongase 2, found in Mus musculus (Mouse).